We begin with the raw amino-acid sequence, 275 residues long: Anthracycline biosynthesis protein DauV (275 aa).

VOC domains are found at residues 8–136 (APAW…VWRK) and 150–263 (SVGW…VVEL).

It functions in the pathway antibiotic biosynthesis; daunorubicin biosynthesis. It participates in antibiotic biosynthesis; carminomycin biosynthesis. In terms of biological role, involved in the biosynthesis of the anthracyclines carminomycin and daunorubicin (daunomycin) which are aromatic polyketide antibiotics that exhibit high cytotoxicity and are widely applied in the chemotherapy of a variety of cancers. Acts jointly with DoxA in the conversion of 13-deoxycarminomycin and 13-deoxydaunorubicin to yield carminomycin and daunorubicin, respectively. This Streptomyces sp. (strain C5) protein is Anthracycline biosynthesis protein DauV (dauV).